The chain runs to 682 residues: Zinc finger protein 16 (682 aa).

The segment covering 1–10 (MPSLRTRREE) has biased composition (basic and acidic residues). Residues 1 to 43 (MPSLRTRREEAEMELSVPGPSPWTPAAQARVRDAPAVTHPGSA) are disordered. Residues 62-210 (YQQPDCDTRT…GVPTAESPLI (149 aa)) are necessary for transcription activation. The C2H2-type 1; degenerate zinc-finger motif lies at 209 to 231 (LICNECGKTFQGNPDLIQRQIVH). The C2H2-type 2; degenerate zinc finger occupies 237–259 (FMCDDCGKTFSQNSVLKNRHRSH). Residue Lys253 forms a Glycyl lysine isopeptide (Lys-Gly) (interchain with G-Cter in SUMO2) linkage. 8 consecutive C2H2-type zinc fingers follow at residues 265 to 287 (YQCS…QSHH), 293 to 315 (YMCN…QKSH), 321 to 343 (YECN…QRIH), 349 to 371 (YVCS…HRTH), 377 to 399 (FECG…QRVH), 405 to 427 (YECN…HRVH), 433 to 455 (YKCS…RRIH), and 461 to 483 (HVCN…QIIH). 2 required for nuclear localization regions span residues 268-393 (SECG…AHLR) and 341-373 (RIHS…THTG). The tract at residues 473–503 (SSVLRKHQIIHTGEKPYRCSVCGKAFSHSSA) is required for nuclear localization. An N6-acetyllysine modification is found at Lys487. C2H2-type zinc fingers lie at residues 489–511 (YRCS…QGVH), 517–539 (YACH…QRVH), 545–567 (YECT…QRIH), 573–595 (HECN…QKVH), 601–623 (YTCV…QIIH), 629–651 (YKCS…QRIH), and 657–679 (YDCA…QLIH).

It belongs to the krueppel C2H2-type zinc-finger protein family. Interacts with INCA1; the interaction inhibits INCA1 activity and induces the cell cycle process. In terms of tissue distribution, ubiquitous.

It is found in the nucleus. In terms of biological role, acts as a transcriptional activator. Promotes cell proliferation by facilitating the cell cycle phase transition from the S to G2/M phase. Involved in both the hemin- and phorbol myristate acetate (PMA)-induced erythroid and megakaryocytic differentiation, respectively. Also plays a role as an inhibitor of cell apoptosis. This chain is Zinc finger protein 16 (ZNF16), found in Homo sapiens (Human).